We begin with the raw amino-acid sequence, 179 residues long: Transcription factor BOA15 (179 aa).

Its subcellular location is the nucleus. Its function is as follows. Transcription factor that probably coregulates the gene clusters that mediates the biosynthesis of botcinin acid and its botcinin derivatives, acetate-derived polyketides that contribute to virulence when combined with the sesquiterpene botrydial. Botcinin acid and its derivatives have been shown to induce chlorosis and necrosis during host plant infection, but also have antifungal activities. The sequence is that of Transcription factor BOA15 from Botryotinia fuckeliana (strain B05.10) (Noble rot fungus).